We begin with the raw amino-acid sequence, 124 residues long: Transmembrane protein 141 (124 aa).

Helical transmembrane passes span Y29–G48 and L60–V78. Residues N97–E124 form a disordered region.

The protein belongs to the TMEM141 family.

The protein resides in the membrane. This chain is Transmembrane protein 141 (tmem141), found in Danio rerio (Zebrafish).